The chain runs to 31 residues: U2-theraphotoxin-Hhn1a (31 aa).

3 cysteine pairs are disulfide-bonded: cysteine 2-cysteine 14, cysteine 7-cysteine 19, and cysteine 13-cysteine 26.

Expressed by the venom gland.

The protein resides in the secreted. Agglutinates erythrocytes. The chain is U2-theraphotoxin-Hhn1a from Cyriopagopus hainanus (Chinese bird spider).